The following is a 288-amino-acid chain: T-cell-interacting, activating receptor on myeloid cells protein 1 (288 aa).

The signal sequence occupies residues 1–16 (MISRLLSLLCLRLCVG). At 17–258 (QTDIPENGSP…EGYTVDNLIR (242 aa)) the chain is on the extracellular side. Ig-like C2-type domains are found at residues 27-113 (PKPS…HPSN) and 124-217 (PQPS…LEIS). 2 disulfides stabilise this stretch: C49–C97 and C146–C196. N-linked (GlcNAc...) asparagine glycosylation is found at N74 and N185. Residues 259–279 (VGVAAAILLIVGGFLVEAWHS) traverse the membrane as a helical segment. At 280-288 (ERLSPNKPW) the chain is on the cytoplasmic side.

As to quaternary structure, interacts with Fc receptor gamma chain FCER1G. In terms of processing, N-glycosylated. In terms of tissue distribution, expressed in lung, uterus, lymph nodes, spleen, thymus and bone marrow. Expressed in bone marrow CD11b(+)Gr-1(+) granulocyte precursors and mature neutrophils.

Its subcellular location is the cell membrane. In terms of biological role, may act as receptor. Negatively regulates TCR-mediated CD4(+) T cell proliferation and activation, possibly by binding an unknown ligand on the T cell surface. Enhances Toll-like receptor-mediated production of pro-inflammatory cytokines by macrophages and neutrophils. This Mus musculus (Mouse) protein is T-cell-interacting, activating receptor on myeloid cells protein 1 (Tarm1).